The chain runs to 177 residues: SPbeta prophage-derived uncharacterized protein YopI (177 aa).

A helical membrane pass occupies residues 11–31; it reads FEGIIGALLGVIVTLILTHIL.

The protein resides in the cell membrane. The sequence is that of SPbeta prophage-derived uncharacterized protein YopI (yopI) from Bacillus subtilis (strain 168).